Reading from the N-terminus, the 341-residue chain is MDIGILSSLKPAQSFRDNSLGSFINSIDYSDSGEYVATTCSADDTVQIYDALDPKQVHTITCFETGIEVARFTHHDHNLLLSTTKGNKDIQYVSIYDNKRISYFSGHTDIVSSIEVSPIEDQFVSTANDKTLKLWKMNQSSRCLGNLDLPSLGIPAYDPTGLVFAVACHSLSRIFLYDVRNYGSDPFSTFTIDDSRYLSRFSFPPMMPEWKHMEFSNDGKCILLSTRANVHYILDAFSGDVLSRLEDFQELPFSNNFHGGSTTFVPQGNFVIGSADDRTLNVWNLRHTFHHKGKTRPPEHRIVSQSIINPGLVKYNPRYDQLLTAGSQLVFWLPEKYALTS.

4 WD repeats span residues serine 19 to threonine 59, glycine 106 to glycine 145, proline 252 to glycine 293, and valine 303 to serine 341.

It is found in the cytoplasm. The protein localises to the nucleus. This is an uncharacterized protein from Schizosaccharomyces pombe (strain 972 / ATCC 24843) (Fission yeast).